A 239-amino-acid polypeptide reads, in one-letter code: Norbelladine 4'-O-methyltransferase 4 (239 aa).

Residues Val55, Glu77, Gly79–Val80, Ser85, Asp103, and Ala132 contribute to the S-adenosyl-L-methionine site. Asp155 serves as a coordination point for a divalent metal cation. Asp157 serves as a coordination point for S-adenosyl-L-methionine. Residues Asp181 and Asn182 each contribute to the a divalent metal cation site.

Belongs to the class I-like SAM-binding methyltransferase superfamily. Cation-dependent O-methyltransferase family. The cofactor is Mg(2+).

The enzyme catalyses norbelladine + S-adenosyl-L-methionine = 4'-O-methylnorbelladine + S-adenosyl-L-homocysteine + H(+). Its pathway is alkaloid biosynthesis. Its function is as follows. 4'-O-methyltransferase converting norbelladine to 4'-O-methylnorbelladine. 4'-O-methylnorbelladine is a precursor to all Amaryllidaceae alkaloids such as galanthamine, lycorine and haemanthamine, and including haemanthamine- and crinamine-type alkaloids, promising anticancer agents. This Narcissus aff. pseudonarcissus MK-2014 (Daffodil) protein is Norbelladine 4'-O-methyltransferase 4.